A 145-amino-acid chain; its full sequence is 3-hydroxyacyl-[acyl-carrier-protein] dehydratase FabZ (145 aa).

Residue His-47 is part of the active site.

The protein belongs to the thioester dehydratase family. FabZ subfamily.

The protein resides in the cytoplasm. The enzyme catalyses a (3R)-hydroxyacyl-[ACP] = a (2E)-enoyl-[ACP] + H2O. Its function is as follows. Involved in unsaturated fatty acids biosynthesis. Catalyzes the dehydration of short chain beta-hydroxyacyl-ACPs and long chain saturated and unsaturated beta-hydroxyacyl-ACPs. This chain is 3-hydroxyacyl-[acyl-carrier-protein] dehydratase FabZ, found in Vesicomyosocius okutanii subsp. Calyptogena okutanii (strain HA).